The sequence spans 205 residues: ATP-dependent Clp protease proteolytic subunit (205 aa).

The Nucleophile role is filled by S107. Residue H132 is part of the active site.

It belongs to the peptidase S14 family. Fourteen ClpP subunits assemble into 2 heptameric rings which stack back to back to give a disk-like structure with a central cavity, resembling the structure of eukaryotic proteasomes.

Its subcellular location is the cytoplasm. It catalyses the reaction Hydrolysis of proteins to small peptides in the presence of ATP and magnesium. alpha-casein is the usual test substrate. In the absence of ATP, only oligopeptides shorter than five residues are hydrolyzed (such as succinyl-Leu-Tyr-|-NHMec, and Leu-Tyr-Leu-|-Tyr-Trp, in which cleavage of the -Tyr-|-Leu- and -Tyr-|-Trp bonds also occurs).. In terms of biological role, cleaves peptides in various proteins in a process that requires ATP hydrolysis. Has a chymotrypsin-like activity. Plays a major role in the degradation of misfolded proteins. The polypeptide is ATP-dependent Clp protease proteolytic subunit (Pseudoalteromonas translucida (strain TAC 125)).